Here is a 724-residue protein sequence, read N- to C-terminus: Ribosomal protein S6 kinase alpha-1 (724 aa).

S54 bears the Phosphoserine mark. Positions F62–Y310 constitute a Protein kinase 1 domain. ATP-binding positions include L68–V76 and K94. The active-site Proton acceptor is the D187. The residue at position 221 (S221) is a Phosphoserine; by PDPK1. Residue S296 is modified to Phosphoserine. Positions S311–G380 constitute an AGC-kinase C-terminal domain. T348 bears the Phosphothreonine mark. Phosphoserine occurs at positions 352, 358, and 369. The 258-residue stretch at Y407–I664 folds into the Protein kinase 2 domain. Residues I413 to C421 and K436 contribute to the ATP site. Catalysis depends on D524, which acts as the Proton acceptor. T562 is modified (phosphothreonine). A Phosphoserine modification is found at S721.

This sequence belongs to the protein kinase superfamily. AGC Ser/Thr protein kinase family. S6 kinase subfamily. Forms a complex with either MAPK1/ERK2 or MAPK3/ERK1 in quiescent cells. Transiently dissociates following mitogenic stimulation. Interacts with ETV1/ER81 and FGFR1. The cofactor is Mg(2+). In terms of processing, activated by phosphorylation at Ser-221 by PDPK1. Autophosphorylated on Ser-369, as part of the activation process. May be phosphorylated at Thr-348 and Ser-352 by MAPK1/ERK2 and MAPK3/ERK1. Post-translationally, N-terminal myristoylation results in an activated kinase in the absence of added growth factors. Intestine, thymus, and lung.

The protein resides in the nucleus. The protein localises to the cytoplasm. It carries out the reaction L-seryl-[protein] + ATP = O-phospho-L-seryl-[protein] + ADP + H(+). It catalyses the reaction L-threonyl-[protein] + ATP = O-phospho-L-threonyl-[protein] + ADP + H(+). Upon extracellular signal or mitogen stimulation, phosphorylated at Thr-562 in the C-terminal kinase domain (CTKD) by MAPK1/ERK2 and MAPK3/ERK1. The activated CTKD then autophosphorylates Ser-369, allowing binding of PDPK1, which in turn phosphorylates Ser-221 in the N-terminal kinase domain (NTDK) leading to the full activation of the protein and subsequent phosphorylation of the substrates by the NTKD. Functionally, serine/threonine-protein kinase that acts downstream of ERK (MAPK1/ERK2 and MAPK3/ERK1) signaling and mediates mitogenic and stress-induced activation of the transcription factors CREB1, ETV1/ER81 and NR4A1/NUR77, regulates translation through RPS6 and EIF4B phosphorylation, and mediates cellular proliferation, survival, and differentiation by modulating mTOR signaling and repressing pro-apoptotic function of BAD and DAPK1. In fibroblast, is required for EGF-stimulated phosphorylation of CREB1, which results in the subsequent transcriptional activation of several immediate-early genes. In response to mitogenic stimulation (EGF and PMA), phosphorylates and activates NR4A1/NUR77 and ETV1/ER81 transcription factors and the cofactor CREBBP. Upon insulin-derived signal, acts indirectly on the transcription regulation of several genes by phosphorylating GSK3B at 'Ser-9' and inhibiting its activity. Phosphorylates RPS6 in response to serum or EGF via an mTOR-independent mechanism and promotes translation initiation by facilitating assembly of the pre-initiation complex. In response to insulin, phosphorylates EIF4B, enhancing EIF4B affinity for the EIF3 complex and stimulating cap-dependent translation. Is involved in the mTOR nutrient-sensing pathway by directly phosphorylating TSC2 at 'Ser-1798', which potently inhibits TSC2 ability to suppress mTOR signaling, and mediates phosphorylation of RPTOR, which regulates mTORC1 activity and may promote rapamycin-sensitive signaling independently of the PI3K/AKT pathway. Also involved in feedback regulation of mTORC1 and mTORC2 by phosphorylating DEPTOR. Mediates cell survival by phosphorylating the pro-apoptotic proteins BAD and DAPK1 and suppressing their pro-apoptotic function. Promotes the survival of hepatic stellate cells by phosphorylating CEBPB in response to the hepatotoxin carbon tetrachloride (CCl4). Mediates induction of hepatocyte prolifration by TGFA through phosphorylation of CEBPB. Is involved in cell cycle regulation by phosphorylating the CDK inhibitor CDKN1B, which promotes CDKN1B association with 14-3-3 proteins and prevents its translocation to the nucleus and inhibition of G1 progression. Phosphorylates EPHA2 at 'Ser-897', the RPS6KA-EPHA2 signaling pathway controls cell migration. In response to mTORC1 activation, phosphorylates EIF4B at 'Ser-406' and 'Ser-422' which stimulates bicarbonate cotransporter SLC4A7 mRNA translation, increasing SLC4A7 protein abundance and function. This is Ribosomal protein S6 kinase alpha-1 (Rps6ka1) from Mus musculus (Mouse).